The sequence spans 329 residues: Endonuclease 8-like 2 (329 aa).

Residue proline 2 is the Schiff-base intermediate with DNA of the active site. The Proton donor role is filled by glutamate 3. The active-site Proton donor; for beta-elimination activity is lysine 50. The residue at position 50 (lysine 50) is an N6-acetyllysine. Serine 68 carries the post-translational modification Phosphoserine. Residues 68–116 (SLLSEPLREGEQKDKARHHQEASDPSSWSPGGDSAVPSGDDGLQCLGGD) are disordered. A compositionally biased stretch (basic and acidic residues) spans 73 to 89 (PLREGEQKDKARHHQEA). Low complexity predominate over residues 90–102 (SDPSSWSPGGDSA). An N6-acetyllysine modification is found at lysine 149. Asparagine 227 contributes to the DNA binding site. The FPG-type zinc finger occupies 280–316 (QIYQKEQCPAGHQVVRESLGPPGGFQRLTWWCPQCQP). The active-site Proton donor; for delta-elimination activity is the arginine 306.

It belongs to the FPG family. In terms of assembly, binds EP300.

It localises to the nucleus. The enzyme catalyses 2'-deoxyribonucleotide-(2'-deoxyribose 5'-phosphate)-2'-deoxyribonucleotide-DNA = a 3'-end 2'-deoxyribonucleotide-(2,3-dehydro-2,3-deoxyribose 5'-phosphate)-DNA + a 5'-end 5'-phospho-2'-deoxyribonucleoside-DNA + H(+). Its activity is regulated as follows. Acetylation of Lys-50 leads to loss of DNA nicking activity. Involved in base excision repair of DNA damaged by oxidation or by mutagenic agents. Has DNA glycosylase activity towards 5-hydroxyuracil and other oxidized derivatives of cytosine with a preference for mismatched double-stranded DNA (DNA bubbles). Has low or no DNA glycosylase activity towards thymine glycol, 2-hydroxyadenine, hypoxanthine and 8-oxoguanine. Has AP (apurinic/apyrimidinic) lyase activity and introduces nicks in the DNA strand. Cleaves the DNA backbone by beta-delta elimination to generate a single-strand break at the site of the removed base with both 3'- and 5'-phosphates. In Bos taurus (Bovine), this protein is Endonuclease 8-like 2 (NEIL2).